The chain runs to 160 residues: Transcription antitermination protein NusB (160 aa).

This sequence belongs to the NusB family.

Its function is as follows. Involved in transcription antitermination. Required for transcription of ribosomal RNA (rRNA) genes. Binds specifically to the boxA antiterminator sequence of the ribosomal RNA (rrn) operons. The protein is Transcription antitermination protein NusB of Chlamydia pneumoniae (Chlamydophila pneumoniae).